The chain runs to 365 residues: 2-aminoethylphosphonate--pyruvate transaminase (365 aa).

Lys-194 bears the N6-(pyridoxal phosphate)lysine mark.

This sequence belongs to the class-V pyridoxal-phosphate-dependent aminotransferase family. PhnW subfamily. As to quaternary structure, homodimer. Requires pyridoxal 5'-phosphate as cofactor.

The enzyme catalyses (2-aminoethyl)phosphonate + pyruvate = phosphonoacetaldehyde + L-alanine. Functionally, involved in phosphonate degradation. This Bacillus cereus (strain Q1) protein is 2-aminoethylphosphonate--pyruvate transaminase.